Consider the following 35-residue polypeptide: U1-segestritoxin-Sf1a (35 aa).

Disulfide bonds link cysteine 10–cysteine 22 and cysteine 17–cysteine 28. The keys region for toxin activity stretch occupies residues 31–33; it reads DPW.

It belongs to the neurotoxin 16 (SFI) family. In terms of tissue distribution, expressed by the venom gland.

Its subcellular location is the secreted. Insecticidal toxin. This Segestria florentina (Tube-web spider) protein is U1-segestritoxin-Sf1a.